A 110-amino-acid chain; its full sequence is Proline-rich protein 15-like protein A (110 aa).

2 disordered regions span residues 29 to 51 (IAGDHSSNGGEAPGTTDAATDSQ) and 65 to 110 (TKGR…KSGK). Residues 65–85 (TKGRHVKVSHSGRFKEKKRIR) show a composition bias toward basic residues. Positions 100-110 (TTANENNKSGK) are enriched in polar residues.

The protein belongs to the PRR15 family.

The protein is Proline-rich protein 15-like protein A (prr15la) of Danio rerio (Zebrafish).